We begin with the raw amino-acid sequence, 1502 residues long: Nucleoporin NUP170 (1502 aa).

Residues 1–31 (MFQSFFHNNGPAAAGETFSDSRSYPLTNHQE) are disordered. Positions 18-30 (FSDSRSYPLTNHQ) are enriched in polar residues. Residues 233-261 (LISTTMELFMFAISLDKATNELSVFNTHL) form a leucine-zipper region. S1247 is modified (phosphoserine).

It belongs to the non-repetitive/WGA-negative nucleoporin family. Component of the nuclear pore complex (NPC). NPC constitutes the exclusive means of nucleocytoplasmic transport. NPCs allow the passive diffusion of ions and small molecules and the active, nuclear transport receptor-mediated bidirectional transport of macromolecules such as proteins, RNAs, ribonucleoparticles (RNPs), and ribosomal subunits across the nuclear envelope. Due to its 8-fold rotational symmetry, all subunits are present with 8 copies or multiples thereof. During mitosis NUP53 changes its binding partner within the NPC from NUP170 to NIC96, exposing a high affinity binding site for the karyopherin PSE1, and retaining it in the NPC.

The protein localises to the nucleus. The protein resides in the nuclear pore complex. It is found in the nucleus membrane. Functionally, functions as a component of the nuclear pore complex (NPC). NPC components, collectively referred to as nucleoporins (NUPs), can play the role of both NPC structural components and of docking or interaction partners for transiently associated nuclear transport factors. NUP170 probably plays an important role in NPC assembly and organization. In addition it is required for chromosome transmission fidelity. The polypeptide is Nucleoporin NUP170 (NUP170) (Saccharomyces cerevisiae (strain ATCC 204508 / S288c) (Baker's yeast)).